We begin with the raw amino-acid sequence, 102 residues long: Large ribosomal subunit protein mL63 (102 aa).

The protein belongs to the mitochondrion-specific ribosomal protein mL63 family.

The protein resides in the mitochondrion. The chain is Large ribosomal subunit protein mL63 (Mrpl57) from Mus musculus (Mouse).